We begin with the raw amino-acid sequence, 345 residues long: L-threonine 3-dehydrogenase (345 aa).

Cys39 lines the Zn(2+) pocket. Residues Thr41 and His44 each act as charge relay system in the active site. His64, Glu65, Cys94, Cys97, Cys100, and Cys108 together coordinate Zn(2+). NAD(+)-binding positions include Ile176, Asp196, Arg201, Leu263 to Ile265, and Val287 to Tyr288.

It belongs to the zinc-containing alcohol dehydrogenase family. In terms of assembly, homotetramer. Zn(2+) serves as cofactor.

It localises to the cytoplasm. The catalysed reaction is L-threonine + NAD(+) = (2S)-2-amino-3-oxobutanoate + NADH + H(+). It functions in the pathway amino-acid degradation; L-threonine degradation via oxydo-reductase pathway; glycine from L-threonine: step 1/2. Functionally, catalyzes the NAD(+)-dependent oxidation of L-threonine to 2-amino-3-ketobutyrate. The chain is L-threonine 3-dehydrogenase from Anaeromyxobacter dehalogenans (strain 2CP-1 / ATCC BAA-258).